Consider the following 46-residue polypeptide: Defensin Tk-AMP-D5 (46 aa).

4 disulfide bridges follow: C3-C46, C14-C34, C20-C40, and C24-C42.

Its function is as follows. Plant defense peptide. This is Defensin Tk-AMP-D5 from Triticum kiharae (Wheat).